A 1957-amino-acid polypeptide reads, in one-letter code: [F-actin]-monooxygenase MICAL2 (1957 aa).

A monooxygenase domain region spans residues 2–494; the sequence is GENEDEKQAQ…KHLYITKELE (493 aa). FAD-binding positions include Cys97, 116–118, 123–125, Phe183, Tyr298, and Asp398; these read EKR and RNN. In terms of domain architecture, Calponin-homology (CH) spans 516–619; it reads DIRPSKLLTW…MVMYLSKFYE (104 aa). Ser631 bears the Phosphoserine mark. Positions 660-681 match the Nuclear localization signal motif; it reads RKRTPRVDGQTGENDMNKRRRK. Disordered stretches follow at residues 660-714 and 886-942; these read RKRT…NQNK and QNKL…HPSH. Positions 687–714 are enriched in polar residues; that stretch reads DEPSNFSSRSLGSNQECGSSKEGGNQNK. The segment covering 899–910 has biased composition (pro residues); the sequence is PPSPPSRLPSPD. Residues 911 to 925 show a composition bias toward low complexity; sequence PAASSSPSTVDSASP. The LIM zinc-binding domain maps to 1000 to 1062; sequence DTCYFCKKRV…KPHFIHCKTN (63 aa). Zn(2+)-binding residues include Cys1002, Cys1005, His1023, Cys1026, Cys1029, Cys1032, Cys1052, and His1055. Disordered stretches follow at residues 1070 to 1143, 1168 to 1243, 1258 to 1345, 1361 to 1431, 1467 to 1626, and 1675 to 1779; these read AELK…PSEW, SEDS…TPSK, VNKR…LYLP, GEDG…EGGP, KAGE…SPPC, and ESRQ…KEKK. Over residues 1185–1195 the composition is skewed to basic and acidic residues; the sequence is SHTEPCEEKPW. Positions 1232 to 1243 are enriched in polar residues; it reads RANSFQSPTPSK. The span at 1275 to 1294 shows a compositional bias: low complexity; it reads LPSSSSHSSSPPSSSSTSVS. Polar residues predominate over residues 1302 to 1316; sequence SPPQMTASEPLSQVS. The tract at residues 1324–1363 is interaction with MAPK1; it reads TPNFRRRAVAQGAPREIPLYLPHHPKPEWAEYCLVSPGED. Composition is skewed to basic and acidic residues over residues 1388–1402 and 1413–1431; these read SNHR…KDRS and GEDR…EGGP. The segment covering 1485 to 1496 has biased composition (low complexity); it reads VLKPVRPLLLPR. The span at 1552–1562 shows a compositional bias: basic and acidic residues; that stretch reads GGKKAWAKQES. Residues 1570–1579 show a composition bias toward polar residues; the sequence is CTRSFSLRKT. Residue Ser1688 is modified to Phosphoserine. The span at 1718 to 1733 shows a compositional bias: pro residues; that stretch reads APPPPPPPPPPPPPPT. The span at 1751–1762 shows a compositional bias: low complexity; sequence ASSSASSTSSSS. The bMERB domain maps to 1796–1945; that stretch reads KQEELKRLYK…EKAEDQHFES (150 aa).

It belongs to the Mical family. Interacts with PLXNA4. Interacts with RAB1B. Interacts with MAPK1/ERK2. Interacts with RAB35, RAB8A, RAB10, RAB13 and RAB15 (in their GTP-bound forms); binding to RAB35 is of low affinity compared to other Rab proteins; at least in case of RAB8A may bind 2 molecules of RAB8A simultaneously through a high and a low affinity binding site, respectively. May interact with MAPK1/ERK2. Interacts with CORO1C; this interaction recruits MICAL2 to the actin filaments. FAD is required as a cofactor.

The protein resides in the nucleus. The protein localises to the cytoplasm. It carries out the reaction L-methionyl-[F-actin] + NADPH + O2 + H(+) = L-methionyl-(R)-S-oxide-[F-actin] + NADP(+) + H2O. Specifically inhibited by CCG-1423, a small molecule inhibitor of SRF:MKL1/MRTF-A-dependent transcription. In terms of biological role, methionine monooxygenase that promotes depolymerization of F-actin by mediating oxidation of residues 'Met-44' and 'Met-47' on actin to form methionine-sulfoxide, resulting in actin filament disassembly and preventing repolymerization. Regulates the disassembly of branched actin networks also by oxidizing ARP3B-containing ARP2/3 complexes leading to ARP3B dissociation from the network. Acts as a key regulator of the SRF signaling pathway elicited by nerve growth factor and serum: mediates oxidation and subsequent depolymerization of nuclear actin, leading to increase MKL1/MRTF-A presence in the nucleus and promote SRF:MKL1/MRTF-A-dependent gene transcription. Does not activate SRF:MKL1/MRTF-A through RhoA. The sequence is that of [F-actin]-monooxygenase MICAL2 from Homo sapiens (Human).